Consider the following 259-residue polypeptide: UPF0246 protein PFL_1025 (259 aa).

Belongs to the UPF0246 family.

This Pseudomonas fluorescens (strain ATCC BAA-477 / NRRL B-23932 / Pf-5) protein is UPF0246 protein PFL_1025.